Consider the following 286-residue polypeptide: Oxidase hkm6 (286 aa).

His16, His25, and His215 together coordinate Cu cation.

The protein belongs to the tyrosinase family. Cu(2+) serves as cofactor.

The protein operates within secondary metabolite biosynthesis. Its function is as follows. Oxidase; part of the gene cluster that mediates the biosynthesis of hancockiamides, an unusual new family of N-cinnamoylated piperazines. The NRPS hkm10 and the NmrA-like reductase hkm9 are proposed to convert two molecules of L-Phe to the intermediary piperazine called xenocockiamide A. Xenocockiamide A is then converted to hancockiamide D via a series of hydroxylations and O-methylations. The tyrosinase hkm6 may catalyze an aromatic hydroxylation, then the 2-oxoglutarate-dependent Fe(II) dioxygenase hkm4 and the FAD-dependent phenol hydroxylase hkm7 may catalyze consecutive hydroxylations to install 2 more hydroxy groups, and the methyltransferase hkm8 probably catalyzes two methylations using 2 molecules of S-adenosyl-L-methionine (SAM). The NRPS hkm11 activates and transfers trans-cinnamate supplied by the PAL hkm12 to hancockiamide D and produces hancockiamide A. NRPS Hkm11 has the flexibility to tolerate the bulky hancockiamide G as a substrate and the absence of the acetyl-transferase hkm3 opens up the opportunity for hkm11 to introduce a second N-cinnamoyl moiety. The cytochrome P450 monooxygenase hkm5 catalyzes the methylenedioxy bridge formation, converting hancockiamide A into hancockiamide G. Hkm5 can also convert hancockiamide B into hancockiamide C, and hancockiamide D into hancockiamide H. The N-acetyltransferase hkm3 finally transfers an acetyl group to 1-N of piperazine, converting hancockiamide A into hancockiamide B and hancockiamide G into hancockiamide C. This Aspergillus hancockii protein is Oxidase hkm6.